The chain runs to 695 residues: Lupanine 17-hydroxylase [cytochrome c] (695 aa).

The first 26 residues, 1–26 (MSANKNIWIIRLGVAFVCVAIGAAQA), serve as a signal peptide directing secretion. One can recognise a Cytochrome c domain in the interval 598–677 (AMAESGRHIF…ALQAFILQKA (80 aa)). Heme c contacts are provided by cysteine 612, cysteine 615, and histidine 616.

Belongs to the bacterial PQQ dehydrogenase family. Monomer. Requires pyrroloquinoline quinone as cofactor. Heme c is required as a cofactor.

It is found in the periplasm. It catalyses the reaction lupanine + 2 Fe(III)-[cytochrome c] + H2O = 17-hydroxylupanine + 2 Fe(II)-[cytochrome c] + 2 H(+). In terms of biological role, catalyzes the first reaction in the catabolism of the alkaloid lupanine. It dehydrogenates lupanine, which can then be hydrated to produce 17-hydroxylupanine. The protein is Lupanine 17-hydroxylase [cytochrome c] (luh) of Pseudomonas sp.